The chain runs to 528 residues: Butyrophilin subfamily 2 member A2 (528 aa).

The first 29 residues, 1–29 (MESAAALHFSRPASLLLLLLLSLCALVSA), serve as a signal peptide directing secretion. Over 30 to 249 (QVTVVGPTDP…SFMPSVSPCA (220 aa)) the chain is Extracellular. Residues 31–142 (VTVVGPTDPI…SYDEAILHLI (112 aa)) form the Ig-like V-type domain. 3 N-linked (GlcNAc...) asparagine glycosylation sites follow: Asn-47, Asn-115, and Asn-121. The cysteines at positions 52 and 126 are disulfide-linked. The region spanning 150 to 232 (PLIEMRGHED…NNTLLSQKKE (83 aa)) is the Ig-like C2-type domain. Residues 250-270 (VALPIVVVILMILFAVCMYWI) form a helical membrane-spanning segment. Residues 270–320 (INKLQKEKKILSGEKEFERETREIAVKELEKERVQKEEELQVKEKLQEELR) adopt a coiled-coil conformation. Residues 271-528 (NKLQKEKKIL…LHRVGTHQSL (258 aa)) lie on the Cytoplasmic side of the membrane. One can recognise a B30.2/SPRY domain in the interval 311 to 507 (VKEKLQEELR…IFICPALTGA (197 aa)).

The protein belongs to the immunoglobulin superfamily. BTN/MOG family. In terms of processing, N-glycosylated.

It is found in the membrane. In terms of biological role, inhibits the proliferation of CD4 and CD8 T-cells activated by anti-CD3 antibodies, T-cell metabolism and IL2 and IFNG secretion. In Pongo abelii (Sumatran orangutan), this protein is Butyrophilin subfamily 2 member A2 (BTN2A2).